Consider the following 119-residue polypeptide: Large ribosomal subunit protein bL19 (119 aa).

Belongs to the bacterial ribosomal protein bL19 family.

Its function is as follows. This protein is located at the 30S-50S ribosomal subunit interface and may play a role in the structure and function of the aminoacyl-tRNA binding site. The chain is Large ribosomal subunit protein bL19 from Psychromonas ingrahamii (strain DSM 17664 / CCUG 51855 / 37).